The following is a 588-amino-acid chain: Tripartite motif-containing protein 29 (588 aa).

A disordered region spans residues 1 to 66 (MEAADASRSN…GSALKPGEGR (66 aa)). Ser21, Ser28, Ser58, and Ser104 each carry phosphoserine. Tyr106 bears the Phosphotyrosine mark. A B box-type zinc finger spans residues 220–260 (FEARKCPVHGKTMELFCQTDQTCICYLCMFQEHKNHSTVTV). Zn(2+)-binding residues include Cys225, His228, Cys247, and His252. The stretch at 259-352 (TVEEAKAEKE…VKVIMDALDE (94 aa)) forms a coiled coil. Thr476 carries the post-translational modification Phosphothreonine. Position 489 is a phosphoserine (Ser489).

Interacts with VIM and HINT1. Interacts with IKBKG/NEMO. Interacts with STING1. Post-translationally, constitutively phosphorylated by PKC on serine/threonine in A431 cells. Expressed in placenta, prostate and thymus.

The protein resides in the cytoplasm. It localises to the lysosome. Plays a crucial role in the regulation of macrophage activation in response to viral or bacterial infections within the respiratory tract. Mechanistically, TRIM29 interacts with IKBKG/NEMO in the lysosome where it induces its 'Lys-48' ubiquitination and subsequent degradation. In turn, the expression of type I interferons and the production of pro-inflammatory cytokines are inhibited. Additionally, induces the 'Lys-48' ubiquitination of STING1 in a similar way, leading to its degradation. The sequence is that of Tripartite motif-containing protein 29 (TRIM29) from Homo sapiens (Human).